The chain runs to 188 residues: Translation machinery-associated protein 22 (188 aa).

Residues 96-167 form the SUI1 domain; the sequence is VTIKRIERNK…EIEEFLLEKY (72 aa).

Belongs to the DENR family. As to quaternary structure, interacts with the 40S ribosomal subunit.

It localises to the cytoplasm. This chain is Translation machinery-associated protein 22 (TMA22), found in Chaetomium globosum (strain ATCC 6205 / CBS 148.51 / DSM 1962 / NBRC 6347 / NRRL 1970) (Soil fungus).